Consider the following 365-residue polypeptide: Histidinol-phosphate aminotransferase (365 aa).

The disordered stretch occupies residues 1–23 (MSRPVPNPGILDIAPYTPGKSPV). Position 221 is an N6-(pyridoxal phosphate)lysine (Lys-221).

It belongs to the class-II pyridoxal-phosphate-dependent aminotransferase family. Histidinol-phosphate aminotransferase subfamily. Homodimer. The cofactor is pyridoxal 5'-phosphate.

It carries out the reaction L-histidinol phosphate + 2-oxoglutarate = 3-(imidazol-4-yl)-2-oxopropyl phosphate + L-glutamate. Its pathway is amino-acid biosynthesis; L-histidine biosynthesis; L-histidine from 5-phospho-alpha-D-ribose 1-diphosphate: step 7/9. The polypeptide is Histidinol-phosphate aminotransferase (Rhodopseudomonas palustris (strain BisB18)).